A 555-amino-acid chain; its full sequence is uncharacterized protein (555 aa).

ABC transporter domains follow at residues 4–244 (VKVK…PPYK) and 255–547 (IQVR…ARFM). Residues 36-43 (GKSGAGKS) and 292-299 (GPSGVGKT) contribute to the ATP site.

It belongs to the ABC transporter superfamily.

This is an uncharacterized protein from Methanocaldococcus jannaschii (strain ATCC 43067 / DSM 2661 / JAL-1 / JCM 10045 / NBRC 100440) (Methanococcus jannaschii).